The chain runs to 102 residues: Ferredoxin, 2Fe-2S (102 aa).

Residues Cys-11, Cys-24, Cys-56, and Cys-60 each coordinate [2Fe-2S] cluster.

It belongs to the 2Fe2S Shethna-type ferredoxin family. It depends on [2Fe-2S] cluster as a cofactor.

In terms of biological role, ferredoxins are iron-sulfur proteins that transfer electrons in a wide variety of metabolic reactions. The sequence is that of Ferredoxin, 2Fe-2S from Clostridium pasteurianum.